The primary structure comprises 310 residues: Protoheme IX farnesyltransferase (310 aa).

9 consecutive transmembrane segments (helical) span residues 30-47 (VTTL…FGAA), 50-70 (GLPL…LVSG), 102-122 (LGHG…YLGL), 126-146 (WLTA…YTPL), 152-172 (ICTT…WTAI), 181-201 (VALF…IAWL), 228-248 (IVIY…LRFA), 251-271 (IYFL…LRMF), and 286-306 (ARQL…VMML).

The protein belongs to the UbiA prenyltransferase family. Protoheme IX farnesyltransferase subfamily.

The protein localises to the cell inner membrane. The catalysed reaction is heme b + (2E,6E)-farnesyl diphosphate + H2O = Fe(II)-heme o + diphosphate. The protein operates within porphyrin-containing compound metabolism; heme O biosynthesis; heme O from protoheme: step 1/1. In terms of biological role, converts heme B (protoheme IX) to heme O by substitution of the vinyl group on carbon 2 of heme B porphyrin ring with a hydroxyethyl farnesyl side group. This chain is Protoheme IX farnesyltransferase, found in Koribacter versatilis (strain Ellin345).